The following is a 208-amino-acid chain: Interleukin-6 (208 aa).

The N-terminal stretch at 1–27 is a signal peptide; it reads MTFLSTSAFSPLAFSLGLLLVVATAFP. Cys68 and Cys74 are joined by a disulfide. Ser77 bears the Phosphoserine mark. A disulfide bridge links Cys97 with Cys107.

The protein belongs to the IL-6 superfamily. As to quaternary structure, component of a hexamer of two molecules each of IL6, IL6R and IL6ST; first binds to IL6R to associate with the signaling subunit IL6ST. Interacts with IL6R (via the N-terminal ectodomain); this interaction may be affected by IL6R-binding with SORL1, hence decreasing IL6 cis signaling. Interacts with SORL1 (via the N-terminal ectodomain); this interaction leads to IL6 internalization and lysosomal degradation. May form a trimeric complex with the soluble SORL1 ectodomain and soluble IL6R receptor; this interaction might stabilize circulating IL6, hence promoting IL6 trans signaling.

The protein resides in the secreted. Functionally, cytokine with a wide variety of biological functions in immunity, tissue regeneration, and metabolism. Binds to IL6R, then the complex associates to the signaling subunit IL6ST/gp130 to trigger the intracellular IL6-signaling pathway. The interaction with the membrane-bound IL6R and IL6ST stimulates 'classic signaling', whereas the binding of IL6 and soluble IL6R to IL6ST stimulates 'trans-signaling'. Alternatively, 'cluster signaling' occurs when membrane-bound IL6:IL6R complexes on transmitter cells activate IL6ST receptors on neighboring receiver cells. Its function is as follows. IL6 is a potent inducer of the acute phase response. Rapid production of IL6 contributes to host defense during infection and tissue injury, but excessive IL6 synthesis is involved in disease pathology. In the innate immune response, is synthesized by myeloid cells, such as macrophages and dendritic cells, upon recognition of pathogens through toll-like receptors (TLRs) at the site of infection or tissue injury. In the adaptive immune response, is required for the differentiation of B cells into immunoglobulin-secreting cells. Plays a major role in the differentiation of CD4(+) T cell subsets. Essential factor for the development of T follicular helper (Tfh) cells that are required for the induction of germinal-center formation. Required to drive naive CD4(+) T cells to the Th17 lineage. Also required for proliferation of myeloma cells and the survival of plasmablast cells. Acts as an essential factor in bone homeostasis and on vessels directly or indirectly by induction of VEGF, resulting in increased angiogenesis activity and vascular permeability. Induces, through 'trans-signaling' and synergistically with IL1B and TNF, the production of VEGF. Involved in metabolic controls, is discharged into the bloodstream after muscle contraction increasing lipolysis and improving insulin resistance. 'Trans-signaling' in central nervous system also regulates energy and glucose homeostasis. Mediates, through GLP-1, crosstalk between insulin-sensitive tissues, intestinal L cells and pancreatic islets to adapt to changes in insulin demand. Also acts as a myokine. Plays a protective role during liver injury, being required for maintenance of tissue regeneration. Also has a pivotal role in iron metabolism by regulating HAMP/hepcidin expression upon inflammation or bacterial infection. Through activation of IL6ST-YAP-NOTCH pathway, induces inflammation-induced epithelial regeneration. This chain is Interleukin-6 (IL6), found in Felis catus (Cat).